We begin with the raw amino-acid sequence, 434 residues long: Eukaryotic translation initiation factor 3 subunit E (434 aa).

Residues 219–392 (FFNHPKGRDL…GHVVMGTQPL (174 aa)) enclose the PCI domain.

This sequence belongs to the eIF-3 subunit E family. Component of the eukaryotic translation initiation factor 3 (eIF-3) complex. The eIF-3 complex interacts with pix. Interacts with mxt.

The protein resides in the cytoplasm. Component of the eukaryotic translation initiation factor 3 (eIF-3) complex, which is involved in protein synthesis of a specialized repertoire of mRNAs and, together with other initiation factors, stimulates binding of mRNA and methionyl-tRNAi to the 40S ribosome. The eIF-3 complex specifically targets and initiates translation of a subset of mRNAs involved in cell proliferation. This Drosophila persimilis (Fruit fly) protein is Eukaryotic translation initiation factor 3 subunit E (eIF3-S6).